The primary structure comprises 420 residues: Tyrosine--tRNA ligase (420 aa).

Residue tyrosine 33 coordinates L-tyrosine. The 'HIGH' region motif lies at proline 38–histidine 47. L-tyrosine is bound by residues tyrosine 168 and glutamine 172. A 'KMSKS' region motif is present at residues lysine 231–threonine 235. Lysine 234 provides a ligand contact to ATP. Positions methionine 353–leucine 419 constitute an S4 RNA-binding domain.

This sequence belongs to the class-I aminoacyl-tRNA synthetase family. TyrS type 1 subfamily. Homodimer.

It localises to the cytoplasm. The catalysed reaction is tRNA(Tyr) + L-tyrosine + ATP = L-tyrosyl-tRNA(Tyr) + AMP + diphosphate + H(+). Catalyzes the attachment of tyrosine to tRNA(Tyr) in a two-step reaction: tyrosine is first activated by ATP to form Tyr-AMP and then transferred to the acceptor end of tRNA(Tyr). The polypeptide is Tyrosine--tRNA ligase (Desulfitobacterium hafniense (strain DSM 10664 / DCB-2)).